We begin with the raw amino-acid sequence, 505 residues long: Lysine--tRNA ligase (505 aa).

Mg(2+) contacts are provided by Glu-415 and Glu-422.

The protein belongs to the class-II aminoacyl-tRNA synthetase family. Homodimer. Requires Mg(2+) as cofactor.

It localises to the cytoplasm. It carries out the reaction tRNA(Lys) + L-lysine + ATP = L-lysyl-tRNA(Lys) + AMP + diphosphate. This Vibrio parahaemolyticus serotype O3:K6 (strain RIMD 2210633) protein is Lysine--tRNA ligase.